The sequence spans 270 residues: Urease accessory protein UreD (270 aa).

Belongs to the UreD family. UreD, UreF and UreG form a complex that acts as a GTP-hydrolysis-dependent molecular chaperone, activating the urease apoprotein by helping to assemble the nickel containing metallocenter of UreC. The UreE protein probably delivers the nickel.

The protein localises to the cytoplasm. Required for maturation of urease via the functional incorporation of the urease nickel metallocenter. This is Urease accessory protein UreD from Beijerinckia indica subsp. indica (strain ATCC 9039 / DSM 1715 / NCIMB 8712).